A 113-amino-acid chain; its full sequence is Subtilisin inhibitor-like protein 2 (113 aa).

2 cysteine pairs are disulfide-bonded: C35–C50 and C71–C101.

The protein belongs to the protease inhibitor I16 (SSI) family. In terms of assembly, homodimer.

The protein localises to the secreted. Functionally, inhibitor of subtilisin BPN' and trypsin. The sequence is that of Subtilisin inhibitor-like protein 2 from Streptomyces rochei (Streptomyces parvullus).